Consider the following 356-residue polypeptide: Histidinol-phosphate aminotransferase 2 (356 aa).

Lysine 217 is modified (N6-(pyridoxal phosphate)lysine).

Belongs to the class-II pyridoxal-phosphate-dependent aminotransferase family. Histidinol-phosphate aminotransferase subfamily. In terms of assembly, homodimer. Pyridoxal 5'-phosphate is required as a cofactor.

The catalysed reaction is L-histidinol phosphate + 2-oxoglutarate = 3-(imidazol-4-yl)-2-oxopropyl phosphate + L-glutamate. The protein operates within amino-acid biosynthesis; L-histidine biosynthesis; L-histidine from 5-phospho-alpha-D-ribose 1-diphosphate: step 7/9. This Burkholderia pseudomallei (strain 1710b) protein is Histidinol-phosphate aminotransferase 2.